Consider the following 384-residue polypeptide: F-box/kelch-repeat protein At1g64840 (384 aa).

Positions 3–51 constitute an F-box domain; the sequence is PNWSQLPEELLNLISKNLDNCFDVVHARSICRSWRSAFPFPSSLSTLSY. Kelch repeat units lie at residues 87–137 and 259–309; these read PEYF…PLGF and NPFP…CCSA.

The chain is F-box/kelch-repeat protein At1g64840 from Arabidopsis thaliana (Mouse-ear cress).